Here is a 491-residue protein sequence, read N- to C-terminus: Probable glycine dehydrogenase (decarboxylating) subunit 2 (491 aa).

Lys273 bears the N6-(pyridoxal phosphate)lysine mark.

It belongs to the GcvP family. C-terminal subunit subfamily. As to quaternary structure, the glycine cleavage system is composed of four proteins: P, T, L and H. In this organism, the P 'protein' is a heterodimer of two subunits. The cofactor is pyridoxal 5'-phosphate.

It carries out the reaction N(6)-[(R)-lipoyl]-L-lysyl-[glycine-cleavage complex H protein] + glycine + H(+) = N(6)-[(R)-S(8)-aminomethyldihydrolipoyl]-L-lysyl-[glycine-cleavage complex H protein] + CO2. The glycine cleavage system catalyzes the degradation of glycine. The P protein binds the alpha-amino group of glycine through its pyridoxal phosphate cofactor; CO(2) is released and the remaining methylamine moiety is then transferred to the lipoamide cofactor of the H protein. In Bacillus cereus (strain AH187), this protein is Probable glycine dehydrogenase (decarboxylating) subunit 2.